The chain runs to 270 residues: Sec-independent protein translocase protein TatC (270 aa).

Transmembrane regions (helical) follow at residues 35–55 (LILSVVFLAVGMVIAFTYRVQ), 93–113 (AFWAGLTLALPFIVWQIWAFI), 124–144 (WGLPFILGAGFAFAAGVVFGY), 176–196 (VVTFLVAFGVAFELPILAVIL), 209–229 (QGWRFALIGIMILAAVITPTP), and 231–251 (PANMALVAVPLYALYELGVVL).

This sequence belongs to the TatC family. As to quaternary structure, forms a complex with TatA.

It localises to the cell membrane. Part of the twin-arginine translocation (Tat) system that transports large folded proteins containing a characteristic twin-arginine motif in their signal peptide across membranes. The chain is Sec-independent protein translocase protein TatC from Deinococcus radiodurans (strain ATCC 13939 / DSM 20539 / JCM 16871 / CCUG 27074 / LMG 4051 / NBRC 15346 / NCIMB 9279 / VKM B-1422 / R1).